The sequence spans 503 residues: NAD-dependent protein deacetylase HST1 (503 aa).

A Deacetylase sirtuin-type domain is found at 183–468 (RLPNFNTIDH…SLVAKKCHWD (286 aa)). Residues 208 to 227 (GAGV…EGFY) and 290 to 293 (QNID) contribute to the NAD(+) site. Catalysis depends on His310, which acts as the Proton acceptor. Residues Cys318, Cys321, Cys342, and Cys345 each coordinate Zn(2+). NAD(+) contacts are provided by residues 412-414 (GTS), 437-439 (NRD), and Cys454.

This sequence belongs to the sirtuin family. Class I subfamily. Identified in the Set3C complex with HOS2, SIF2, SNT1, CPR1, HOS4/YIL112W and SET3. Its presence is however not essential for meiotic repression by the Set3C complex. Interacts with SUM1 and RFM1. The interaction with SUM1 is mediated by RFM1. It depends on Zn(2+) as a cofactor.

It localises to the nucleus. The enzyme catalyses N(6)-acetyl-L-lysyl-[protein] + NAD(+) + H2O = 2''-O-acetyl-ADP-D-ribose + nicotinamide + L-lysyl-[protein]. Functionally, NAD-dependent histone deacetylase involved in telomeric silencing. Histone deacetylase proteins act via the formation of large multiprotein complexes that are responsible for the deacetylation of lysine residues on the N-terminal part of the core histones (H2A, H2B, H3 and H4). Histone deacetylation gives a tag for epigenetic repression and plays an important role in transcriptional regulation, cell cycle progression and developmental events. Restores silencing at HMR in SIR2 mutants when overexpressed. Required to repress middle sporulation genes during vegetative growth. Acts as a sensor of NAD(+) levels and regulator of NAD(+) biosynthesis. Regulates the gene expression of de novo NAD(+) biosynthesis genes. The protein is NAD-dependent protein deacetylase HST1 (HST1) of Saccharomyces cerevisiae (strain ATCC 204508 / S288c) (Baker's yeast).